The following is a 79-amino-acid chain: Acyl carrier protein (79 aa).

The Carrier domain occupies 2–77 (SDIGERVKKI…DATKFLEKNA (76 aa)). Ser37 carries the O-(pantetheine 4'-phosphoryl)serine modification.

Belongs to the acyl carrier protein (ACP) family. 4'-phosphopantetheine is transferred from CoA to a specific serine of apo-ACP by AcpS. This modification is essential for activity because fatty acids are bound in thioester linkage to the sulfhydryl of the prosthetic group.

The protein localises to the cytoplasm. The protein operates within lipid metabolism; fatty acid biosynthesis. Its function is as follows. Carrier of the growing fatty acid chain in fatty acid biosynthesis. The chain is Acyl carrier protein from Bradyrhizobium diazoefficiens (strain JCM 10833 / BCRC 13528 / IAM 13628 / NBRC 14792 / USDA 110).